Reading from the N-terminus, the 420-residue chain is Pre-mRNA-splicing factor RBM22 (420 aa).

N-acetylalanine is present on alanine 2. Phosphoserine is present on residues serine 4 and serine 102. Residues lysine 139 and lysine 149 each participate in a glycyl lysine isopeptide (Lys-Gly) (interchain with G-Cter in SUMO2) cross-link. Residues 159–186 (RNRPHICSFWVKGECKRGEECPYRHEKP) form a C3H1-type zinc finger. Lysine 212 carries the post-translational modification N6-acetyllysine. Residues 232 to 305 (TTLYVGGLGD…RRLNVKWGRS (74 aa)) form the RRM domain. Lysine 290 participates in a covalent cross-link: Glycyl lysine isopeptide (Lys-Gly) (interchain with G-Cter in SUMO2). 2 disordered regions span residues 303-343 (GRSQ…AAEE) and 371-420 (IAPP…HSSP). Basic and acidic residues predominate over residues 309–318 (RGKEKEKDGT).

This sequence belongs to the SLT11 family. As to quaternary structure, component of the pre-catalytic and catalytic spliceosome complexes. Component of the postcatalytic spliceosome P complex. Interacts with PDCD6; the interaction induces translocation of PDCD6 in the cytoplasm. Interacts with PPIL1.

The protein resides in the nucleus. It localises to the cytoplasm. Functionally, required for pre-mRNA splicing as component of the activated spliceosome. Involved in the first step of pre-mRNA splicing. Binds directly to the internal stem-loop (ISL) domain of the U6 snRNA and to the pre-mRNA intron near the 5' splice site during the activation and catalytic phases of the spliceosome cycle. Involved in both translocations of the nuclear SLU7 to the cytoplasm and the cytosolic calcium-binding protein PDCD6 to the nucleus upon cellular stress responses. This is Pre-mRNA-splicing factor RBM22 (Rbm22) from Rattus norvegicus (Rat).